Consider the following 287-residue polypeptide: 4-hydroxybenzoate octaprenyltransferase (287 aa).

The next 7 helical transmembrane spans lie at 30-50 (ALWIASDGHPAPSLVAIFALG), 92-112 (IAIAVGLALVSFLLILPLNGL), 133-153 (FFAIPQAYLGIAFGFGIPMAF), 158-178 (DTVPMIAWAMLAANVFWSVAY), 207-227 (VLAIMLCYAAMLGIYVWLGAA), 232-252 (WPYWAGWAAAAGCSIYHYTLI), and 266-286 (HNNWLGGVLFAGIAAHYALAV).

This sequence belongs to the UbiA prenyltransferase family. Mg(2+) serves as cofactor.

It localises to the cell inner membrane. The enzyme catalyses all-trans-octaprenyl diphosphate + 4-hydroxybenzoate = 4-hydroxy-3-(all-trans-octaprenyl)benzoate + diphosphate. It functions in the pathway cofactor biosynthesis; ubiquinone biosynthesis. Its function is as follows. Catalyzes the prenylation of para-hydroxybenzoate (PHB) with an all-trans polyprenyl group. Mediates the second step in the final reaction sequence of ubiquinone-8 (UQ-8) biosynthesis, which is the condensation of the polyisoprenoid side chain with PHB, generating the first membrane-bound Q intermediate 3-octaprenyl-4-hydroxybenzoate. This chain is 4-hydroxybenzoate octaprenyltransferase, found in Burkholderia pseudomallei (strain 1106a).